The sequence spans 212 residues: Stem bromelain (212 aa).

2 cysteine pairs are disulfide-bonded: Cys-23-Cys-63 and Cys-57-Cys-96. Cys-26 is an active-site residue. Residue Asn-117 is glycosylated (N-linked (GlcNAc...) asparagine). A disulfide bond links Cys-152 and Cys-199. The active site involves His-158.

Belongs to the peptidase C1 family.

The catalysed reaction is Broad specificity for cleavage of proteins, but strong preference for Z-Arg-Arg-|-NHMec among small molecule substrates.. Functionally, cysteine proteinase with a high level of diversity in substrate specificity. The polypeptide is Stem bromelain (Ananas comosus (Pineapple)).